We begin with the raw amino-acid sequence, 1048 residues long: Platelet-derived growth factor receptor beta (1048 aa).

The signal sequence occupies residues 1–30 (MLRASAMRAAVLHLTVALAALLSSCTTVSC). Topologically, residues 31–528 (LKIVPEEKQL…LVSSSLFSQV (498 aa)) are extracellular. The region spanning 35–124 (PEEKQLILAE…EIKEVAVFVP (90 aa)) is the Ig-like C2-type 1 domain. Intrachain disulfides connect Cys52/Cys108 and Cys153/Cys194. 4 N-linked (GlcNAc...) asparagine glycosylation sites follow: Asn87, Asn159, Asn224, and Asn239. 2 Ig-like C2-type domains span residues 216–309 (PEDI…ASVN) and 319–406 (AVKS…KEVT). Cys240 and Cys293 form a disulfide bridge. Asn309, Asn327, and Asn457 each carry an N-linked (GlcNAc...) asparagine glycan. Residues Cys434 and Cys503 are joined by a disulfide bond. A helical transmembrane segment spans residues 529 to 549 (VLLAVVLTLVPIIIMSIIILI). Over 550–1048 (AVWKKKPRYE…PIPDPKPEKS (499 aa)) the chain is Cytoplasmic. A phosphotyrosine; by autocatalysis mark is found at Tyr558, Tyr575, and Tyr577. A Protein kinase domain is found at 596–957 (LVLGRTLGSG…FLVHCVGDML (362 aa)). ATP contacts are provided by residues 602–610 (LGSGAFGRV) and Lys630. Tyr735, Tyr746, Tyr758, Tyr766, and Tyr770 each carry phosphotyrosine; by autocatalysis. Residue Asp821 is the Proton acceptor of the active site. 2 positions are modified to phosphotyrosine; by autocatalysis: Tyr852 and Tyr1036.

The protein belongs to the protein kinase superfamily. Tyr protein kinase family. CSF-1/PDGF receptor subfamily. As to quaternary structure, interacts with homodimeric PDGFB and PDGFD, and with heterodimers formed by PDGFA and PDGFB. Monomer in the absence of bound ligand. Interaction with homodimeric PDGFB, heterodimers formed by PDGFA and PDGFB or homodimeric PDGFD, leads to receptor dimerization, where both PDGFRA homodimers and heterodimers with PDGFRB are observed. In terms of processing, ubiquitinated. After autophosphorylation, the receptor is polyubiquitinated, leading to its degradation. Post-translationally, autophosphorylated on tyrosine residues upon ligand binding. Autophosphorylation occurs in trans, i.e. one subunit of the dimeric receptor phosphorylates tyrosine residues on the other subunit.

The protein resides in the cell membrane. It is found in the cytoplasmic vesicle. The protein localises to the lysosome lumen. The enzyme catalyses L-tyrosyl-[protein] + ATP = O-phospho-L-tyrosyl-[protein] + ADP + H(+). Present in an inactive conformation in the absence of bound ligand. Binding of PDGFB and/or PDGFD leads to dimerization and activation by autophosphorylation on tyrosine residues. Its function is as follows. Tyrosine-protein kinase that acts as a cell-surface receptor for homodimeric PDGFB and PDGFD and for heterodimers formed by PDGFA and PDGFB, and plays an essential role in the regulation of embryonic development, cell proliferation, survival, differentiation, chemotaxis and migration. Plays an essential role in blood vessel development by promoting proliferation, migration and recruitment of pericytes and smooth muscle cells to endothelial cells. Required for normal development of the cardiovascular system. Required for normal recruitment of pericytes (mesangial cells) in the kidney glomerulus, and for normal formation of a branched network of capillaries in kidney glomeruli. Promotes rearrangement of the actin cytoskeleton and the formation of membrane ruffles. Binding of its cognate ligands - homodimeric PDGFB, heterodimers formed by PDGFA and PDGFB or homodimeric PDGFD -leads to the activation of several signaling cascades; the response depends on the nature of the bound ligand and is modulated by the formation of heterodimers between PDGFRA and PDGFRB. Receptor signaling is down-regulated by protein phosphatases that dephosphorylate the receptor and its down-stream effectors, and by rapid internalization of the activated receptor. The protein is Platelet-derived growth factor receptor beta (pdgfrb) of Takifugu rubripes (Japanese pufferfish).